The following is a 479-amino-acid chain: Trigger factor (479 aa).

The 88-residue stretch at 174 to 261 folds into the PPIase FKBP-type domain; sequence GDIAVVSFSG…LKELKTRELP (88 aa). The segment at 437–479 is disordered; that stretch reads KVLESEAKTSKPAAKSKGSKTKSTKTKTNKAKTEKPASDKTKS. Residues 453-466 show a composition bias toward basic residues; that stretch reads KGSKTKSTKTKTNK. A compositionally biased stretch (basic and acidic residues) spans 467-479; sequence AKTEKPASDKTKS.

This sequence belongs to the FKBP-type PPIase family. Tig subfamily.

It is found in the cytoplasm. It catalyses the reaction [protein]-peptidylproline (omega=180) = [protein]-peptidylproline (omega=0). Its function is as follows. Involved in protein export. Acts as a chaperone by maintaining the newly synthesized protein in an open conformation. Functions as a peptidyl-prolyl cis-trans isomerase. This Prochlorococcus marinus (strain MIT 9303) protein is Trigger factor.